The following is a 37-amino-acid chain: Small ribosomal subunit protein eS32 (37 aa).

This sequence belongs to the eukaryotic ribosomal protein eS32 family. Part of the small ribosomal subunit.

This is Small ribosomal subunit protein eS32 from Pyrococcus furiosus (strain ATCC 43587 / DSM 3638 / JCM 8422 / Vc1).